We begin with the raw amino-acid sequence, 158 residues long: Protein-export protein SecB (158 aa).

Belongs to the SecB family. As to quaternary structure, homotetramer, a dimer of dimers. One homotetramer interacts with 1 SecA dimer.

The protein resides in the cytoplasm. In terms of biological role, one of the proteins required for the normal export of preproteins out of the cell cytoplasm. It is a molecular chaperone that binds to a subset of precursor proteins, maintaining them in a translocation-competent state. It also specifically binds to its receptor SecA. The polypeptide is Protein-export protein SecB (Rhodopseudomonas palustris (strain HaA2)).